Consider the following 96-residue polypeptide: Large ribosomal subunit protein eL21 (96 aa).

The tract at residues 1–37 (MPSSNGPMTGTRDKLSNSPRERGMSPPQRAIQEYDEG) is disordered. Residues 11 to 23 (TRDKLSNSPRERG) are compositionally biased toward basic and acidic residues.

Belongs to the eukaryotic ribosomal protein eL21 family.

In Haloquadratum walsbyi (strain DSM 16790 / HBSQ001), this protein is Large ribosomal subunit protein eL21.